A 757-amino-acid chain; its full sequence is Polyribonucleotide nucleotidyltransferase (757 aa).

Positions 525 and 531 each coordinate Mg(2+). The KH domain maps to 591–650 (PRVISVNIPVDKIGELIGPKGKTINAIQDETGADISIEEDGAVYIGAVDGPSAEAARAQV). Positions 662-734 (GESFLGTVVK…DRGKLSLAPV (73 aa)) constitute an S1 motif domain. Residues 736 to 757 (EEAADQEGSAAASDGPEAPAEG) form a disordered region.

This sequence belongs to the polyribonucleotide nucleotidyltransferase family. Mg(2+) serves as cofactor.

The protein resides in the cytoplasm. It carries out the reaction RNA(n+1) + phosphate = RNA(n) + a ribonucleoside 5'-diphosphate. In terms of biological role, involved in mRNA degradation. Catalyzes the phosphorolysis of single-stranded polyribonucleotides processively in the 3'- to 5'-direction. This Clavibacter sepedonicus (Clavibacter michiganensis subsp. sepedonicus) protein is Polyribonucleotide nucleotidyltransferase.